Here is a 177-residue protein sequence, read N- to C-terminus: Inorganic pyrophosphatase (177 aa).

Substrate is bound by residues K31, R45, and Y57. Mg(2+)-binding residues include D67, D72, and D104. Y141 contacts substrate.

The protein belongs to the PPase family. As to quaternary structure, homohexamer. Also forms homotrimers, but the trimeric form is 23% less active than the hexamer. In fact, likely forms a dimer of trimers. Requires Mg(2+) as cofactor.

It is found in the cytoplasm. The catalysed reaction is diphosphate + H2O = 2 phosphate + H(+). Its activity is regulated as follows. Inhibited by sodium fluoride (NaF) in vitro, similarly to other class A type inorganic pyrophosphatases. In terms of biological role, catalyzes the hydrolysis of inorganic pyrophosphate (PPi) forming two phosphate ions. The hydrolysis of PPi by inorganic pyrophosphatase releases a considerable amount of energy that can drive unfavorable biochemical transformations to completion. Is not active on nucleoside triphosphates (ATP, TTP, GTP, or CTP) or nucleoside diphosphate (ADP). The sequence is that of Inorganic pyrophosphatase from Haloferax volcanii (strain ATCC 29605 / DSM 3757 / JCM 8879 / NBRC 14742 / NCIMB 2012 / VKM B-1768 / DS2) (Halobacterium volcanii).